The primary structure comprises 885 residues: Alpha-actinin (885 aa).

An actin-binding region spans residues 1-242 (MTQDGYMQQE…IMTYVSWYYH (242 aa)). Calponin-homology (CH) domains follow at residues 26-130 (KQQR…LRFA) and 139-245 (MTAK…HAFH). Spectrin repeat units lie at residues 270 to 377 (LMEE…EEWL), 389 to 494 (HLAQ…ALDE), 508 to 614 (EFAK…HTLQ), and 626 to 727 (LRRQ…NEVE). EF-hand domains follow at residues 741–776 (EQLN…LGYN) and 780–815 (DDRP…EYTD). Residues Asp754, Thr758, Arg760, Glu765, Asp793, Asn795, Thr797, and Tyr799 each contribute to the Ca(2+) site.

Belongs to the alpha-actinin family. Homodimer; antiparallel.

In terms of biological role, F-actin cross-linking protein which is thought to anchor actin to a variety of intracellular structures. This is a bundling protein. This chain is Alpha-actinin, found in Dermatophagoides farinae (American house dust mite).